Here is a 353-residue protein sequence, read N- to C-terminus: Photosystem II protein D1 (353 aa).

Thr-2 bears the N-acetylthreonine mark. Phosphothreonine is present on Thr-2. Transmembrane regions (helical) follow at residues Tyr-29–Ala-46, His-118–Leu-133, and Trp-142–Ala-156. Residue His-118 coordinates chlorophyll a. Tyr-126 contributes to the pheophytin a binding site. [CaMn4O5] cluster is bound by residues Asp-170 and Glu-189. The helical transmembrane segment at Phe-197 to Leu-218 threads the bilayer. Chlorophyll a is bound at residue His-198. A quinone-binding positions include His-215 and Ser-264–Phe-265. His-215 lines the Fe cation pocket. His-272 provides a ligand contact to Fe cation. The helical transmembrane segment at Phe-274–Leu-288 threads the bilayer. The [CaMn4O5] cluster site is built by His-332, Glu-333, Asp-342, and Ala-344. A propeptide spanning residues Ser-345–Gly-353 is cleaved from the precursor.

This sequence belongs to the reaction center PufL/M/PsbA/D family. PSII is composed of 1 copy each of membrane proteins PsbA, PsbB, PsbC, PsbD, PsbE, PsbF, PsbH, PsbI, PsbJ, PsbK, PsbL, PsbM, PsbT, PsbX, PsbY, PsbZ, Psb30/Ycf12, at least 3 peripheral proteins of the oxygen-evolving complex and a large number of cofactors. It forms dimeric complexes. Requires The D1/D2 heterodimer binds P680, chlorophylls that are the primary electron donor of PSII, and subsequent electron acceptors. It shares a non-heme iron and each subunit binds pheophytin, quinone, additional chlorophylls, carotenoids and lipids. D1 provides most of the ligands for the Mn4-Ca-O5 cluster of the oxygen-evolving complex (OEC). There is also a Cl(-1) ion associated with D1 and D2, which is required for oxygen evolution. The PSII complex binds additional chlorophylls, carotenoids and specific lipids. as cofactor. In terms of processing, tyr-161 forms a radical intermediate that is referred to as redox-active TyrZ, YZ or Y-Z. Post-translationally, C-terminally processed by CTPA; processing is essential to allow assembly of the oxygen-evolving complex and thus photosynthetic growth.

It localises to the plastid. It is found in the chloroplast thylakoid membrane. It carries out the reaction 2 a plastoquinone + 4 hnu + 2 H2O = 2 a plastoquinol + O2. In terms of biological role, photosystem II (PSII) is a light-driven water:plastoquinone oxidoreductase that uses light energy to abstract electrons from H(2)O, generating O(2) and a proton gradient subsequently used for ATP formation. It consists of a core antenna complex that captures photons, and an electron transfer chain that converts photonic excitation into a charge separation. The D1/D2 (PsbA/PsbD) reaction center heterodimer binds P680, the primary electron donor of PSII as well as several subsequent electron acceptors. In Huperzia lucidula (Shining clubmoss), this protein is Photosystem II protein D1.